Here is a 208-residue protein sequence, read N- to C-terminus: Thymidylate kinase (208 aa).

Residue Gly-10–Thr-17 coordinates ATP.

It belongs to the thymidylate kinase family.

It catalyses the reaction dTMP + ATP = dTDP + ADP. Functionally, phosphorylation of dTMP to form dTDP in both de novo and salvage pathways of dTTP synthesis. The chain is Thymidylate kinase from Actinobacillus pleuropneumoniae serotype 5b (strain L20).